Here is an 86-residue protein sequence, read N- to C-terminus: YcgL domain-containing protein XC_4086 (86 aa).

A YcgL domain is found at 1 to 83; the sequence is MHAYVYKSQR…PKTVVLAGEC (83 aa).

The sequence is that of YcgL domain-containing protein XC_4086 from Xanthomonas campestris pv. campestris (strain 8004).